The sequence spans 152 residues: D-aminoacyl-tRNA deacylase (152 aa).

Positions 142 to 143 (GP) match the Gly-cisPro motif, important for rejection of L-amino acids motif.

It belongs to the DTD family. As to quaternary structure, homodimer.

It localises to the cytoplasm. The enzyme catalyses glycyl-tRNA(Ala) + H2O = tRNA(Ala) + glycine + H(+). It carries out the reaction a D-aminoacyl-tRNA + H2O = a tRNA + a D-alpha-amino acid + H(+). Its function is as follows. An aminoacyl-tRNA editing enzyme that deacylates mischarged D-aminoacyl-tRNAs. Also deacylates mischarged glycyl-tRNA(Ala), protecting cells against glycine mischarging by AlaRS. Acts via tRNA-based rather than protein-based catalysis; rejects L-amino acids rather than detecting D-amino acids in the active site. By recycling D-aminoacyl-tRNA to D-amino acids and free tRNA molecules, this enzyme counteracts the toxicity associated with the formation of D-aminoacyl-tRNA entities in vivo and helps enforce protein L-homochirality. The protein is D-aminoacyl-tRNA deacylase of Burkholderia ambifaria (strain ATCC BAA-244 / DSM 16087 / CCUG 44356 / LMG 19182 / AMMD) (Burkholderia cepacia (strain AMMD)).